The primary structure comprises 1230 residues: Myosin-1 (1230 aa).

The segment at 1–32 is disordered; it reads MGISRRPKADKNASAADSAPGGKPNIQKAQFD. Positions 39–713 constitute a Myosin motor domain; that stretch reads VGVSDLTLIS…TLFALEHMRD (675 aa). Residue 132-139 coordinates ATP; that stretch reads GESGAGKT. Residues 403–485 form an actin-binding region; that stretch reads SIGILDIYGF…PGVFSAMKDA (83 aa). IQ domains lie at 717–737 and 738–763; these read HNMA…RIEA and ATRI…KGHQ. Positions 771–961 constitute a TH1 domain; sequence RRRYSLLGSR…TIHTQAGEPP (191 aa). Disordered regions lie at residues 945–1018, 1033–1065, and 1116–1230; these read QDHY…AARP, TRNT…PVSK, and AYLE…EDDW. Positions 1033 to 1045 are enriched in polar residues; sequence TRNTSVQSTQSTR. Pro residues-rich tracts occupy residues 1047–1062 and 1122–1142; these read VPPP…PPAP and TPPP…PGPP. Residues 1064-1123 enclose the SH3 domain; it reads SKEPQYRVLYEFAGQSANEFSLKQGEIVTVLQKETNGWWLTKNVRGQGWAPTAYLEEVTP. The segment covering 1179-1214 has biased composition (low complexity); the sequence is RDSGMSISSNGSGNNSGRSTPTPSLAGGLAEALRAR.

Belongs to the TRAFAC class myosin-kinesin ATPase superfamily. Myosin family.

It is found in the cytoplasm. Its subcellular location is the cytoskeleton. The protein localises to the actin patch. Functionally, type-I myosin implicated in the organization of the actin cytoskeleton. Required for proper actin cytoskeleton polarization. At the cell cortex, assembles in patch-like structures together with proteins from the actin-polymerizing machinery and promotes actin assembly. Functions as actin nucleation-promoting factor (NPF) for the Arp2/3 complex. This is Myosin-1 (myoA) from Sclerotinia sclerotiorum (strain ATCC 18683 / 1980 / Ss-1) (White mold).